The following is a 122-amino-acid chain: Large ribosomal subunit protein uL18 (122 aa).

Belongs to the universal ribosomal protein uL18 family. Part of the 50S ribosomal subunit; part of the 5S rRNA/L5/L18/L25 subcomplex. Contacts the 5S and 23S rRNAs.

In terms of biological role, this is one of the proteins that bind and probably mediate the attachment of the 5S RNA into the large ribosomal subunit, where it forms part of the central protuberance. The sequence is that of Large ribosomal subunit protein uL18 from Petrotoga mobilis (strain DSM 10674 / SJ95).